Reading from the N-terminus, the 526-residue chain is Peptide chain release factor 3 (526 aa).

The tr-type G domain maps to 8 to 277 (DKRRTFAIIS…GLTQWAPKPQ (270 aa)). GTP contacts are provided by residues 17–24 (SHPDAGKT), 85–89 (DTPGH), and 139–142 (NKLD).

It belongs to the TRAFAC class translation factor GTPase superfamily. Classic translation factor GTPase family. PrfC subfamily.

Its subcellular location is the cytoplasm. Increases the formation of ribosomal termination complexes and stimulates activities of RF-1 and RF-2. It binds guanine nucleotides and has strong preference for UGA stop codons. It may interact directly with the ribosome. The stimulation of RF-1 and RF-2 is significantly reduced by GTP and GDP, but not by GMP. The chain is Peptide chain release factor 3 from Actinobacillus succinogenes (strain ATCC 55618 / DSM 22257 / CCUG 43843 / 130Z).